The chain runs to 200 residues: Rubrerythrin (200 aa).

The Ferritin-like diiron domain maps to serine 12–serine 155. Residues glutamate 29, glutamate 62, glutamate 103, glutamate 106, glutamate 137, histidine 140, cysteine 167, cysteine 170, cysteine 183, and cysteine 186 each contribute to the Fe(3+) site. The Rubredoxin-like domain maps to glutamate 162 to tyrosine 200.

Homodimer. Possesses two rubredoxin-like centers and two non-sulfur oxo-bridged di-iron centers per dimer. Fe(3+) serves as cofactor.

Its subcellular location is the cytoplasm. In terms of biological role, may provide oxidative stress protection via catalytic reduction of intracellular hydrogen peroxide. In Porphyromonas gingivalis (strain ATCC BAA-308 / W83), this protein is Rubrerythrin (rbr).